The sequence spans 114 residues: Probable non-functional T cell receptor beta variable 5-3 (114 aa).

An N-terminal signal peptide occupies residues 1–21 (MGPGLLCWELLYLLGAGPVEA). The Ig-like domain maps to 22 to 114 (GVTQSPTHLI…SALYLCARSL (93 aa)). A disulfide bridge links cysteine 42 with cysteine 110. N-linked (GlcNAc...) asparagine glycosylation occurs at asparagine 96.

In terms of assembly, alpha-beta TR is a heterodimer composed of an alpha and beta chain; disulfide-linked. The alpha-beta TR is associated with the transmembrane signaling CD3 coreceptor proteins to form the TR-CD3 (TcR or TCR). The assembly of alpha-beta TR heterodimers with CD3 occurs in the endoplasmic reticulum where a single alpha-beta TR heterodimer associates with one CD3D-CD3E heterodimer, one CD3G-CD3E heterodimer and one CD247 homodimer forming a stable octameric structure. CD3D-CD3E and CD3G-CD3E heterodimers preferentially associate with TR alpha and TR beta chains, respectively. The association of the CD247 homodimer is the last step of TcR assembly in the endoplasmic reticulum and is required for transport to the cell surface.

It localises to the cell membrane. Functionally, probable non-functional open reading frame (ORF) of V region of the variable domain of T cell receptor (TR) beta chain. Non-functional ORF generally cannot participate in the synthesis of a productive T cell receptor (TR) chain due to altered V-(D)-J or switch recombination and/or splicing site (at mRNA level) and/or conserved amino acid change (protein level). Alpha-beta T cell receptors are antigen specific receptors which are essential to the immune response and are present on the cell surface of T lymphocytes. Recognize peptide-major histocompatibility (MH) (pMH) complexes that are displayed by antigen presenting cells (APC), a prerequisite for efficient T cell adaptive immunity against pathogens. Binding of alpha-beta TR to pMH complex initiates TR-CD3 clustering on the cell surface and intracellular activation of LCK that phosphorylates the ITAM motifs of CD3G, CD3D, CD3E and CD247 enabling the recruitment of ZAP70. In turn ZAP70 phosphorylates LAT, which recruits numerous signaling molecules to form the LAT signalosome. The LAT signalosome propagates signal branching to three major signaling pathways, the calcium, the mitogen-activated protein kinase (MAPK) kinase and the nuclear factor NF-kappa-B (NF-kB) pathways, leading to the mobilization of transcription factors that are critical for gene expression and essential for T cell growth and differentiation. The T cell repertoire is generated in the thymus, by V-(D)-J rearrangement. This repertoire is then shaped by intrathymic selection events to generate a peripheral T cell pool of self-MH restricted, non-autoaggressive T cells. Post-thymic interaction of alpha-beta TR with the pMH complexes shapes TR structural and functional avidity. This chain is Probable non-functional T cell receptor beta variable 5-3, found in Homo sapiens (Human).